The primary structure comprises 422 residues: Glutamate-1-semialdehyde 2,1-aminomutase (422 aa).

N6-(pyridoxal phosphate)lysine is present on K264.

It belongs to the class-III pyridoxal-phosphate-dependent aminotransferase family. HemL subfamily. As to quaternary structure, homodimer. It depends on pyridoxal 5'-phosphate as a cofactor.

The protein resides in the cytoplasm. It carries out the reaction (S)-4-amino-5-oxopentanoate = 5-aminolevulinate. It participates in porphyrin-containing compound metabolism; protoporphyrin-IX biosynthesis; 5-aminolevulinate from L-glutamyl-tRNA(Glu): step 2/2. The protein is Glutamate-1-semialdehyde 2,1-aminomutase of Clostridium tetani (strain Massachusetts / E88).